The following is a 1532-amino-acid chain: MKAKRFKINAISLSIFLAYALTPYSEAALVRDDVDYQIFRDFAENKGKFFVGATDLSVKNKRGQNIGNALSNVPMIDFSVADVNKRIATVVDPQYAVSVKHAKAEVHTFYYGQYNGHNDVADKENEYRVVEQNNYEPHKAWGASNLGRLEDYNMARFNKFVTEVAPIAPTDAGGGLDTYKDKNRFSSFVRIGAGRQLVYEKGVYHQEGNEKGYDLRDLSQAYRYAIAGTPYKDINIDQTMNTEGLIGFGNHNKQYSAEELKQALSQDALTNYGVLGDSGSPLFAFDKQKNQWVFLGTYDYWAGYGKKSWQEWNIYKKEFADKIKQHDNAGTVKGNGEHHWKTTGTNSHIGSTAVRLANNEGDANNGQNVTFEDNGTLVLNQNINQGAGGLFFKGDYTVKGANNDITWLGAGIDVADGKKVVWQVKNPNGDRLAKIGKGTLEINGTGVNQGQLKVGDGTVILNQKADADKKVQAFSQVGIVSGRGTLVLNSSNQINPDNLYFGFRGGRLDANGNDLTFEHIRNVDEGARIVNHNTDHASTITLTGKSLITNPNSLSVHSIQNDYDEDDYSYYYRPRRPIPQGKDLYYKNYRYYALKSGGRLNAPMPENGVAENNDWIFMGYTQEEARKNAMNHKNNRRIGDFGGFFDEENGKGHNGALNLNFNGKSAQKRFLLTGGANLNGKISVTQGNVLLSGRPTPHARDFVNKSSARKDAHFSKNNEVVFEDDWINRTFKAAEIAVNQSASFSSGRNVSDITANITATDNAKVNLGYKNGDEVCVRSDYTGYVTCNTGNLSDKALNSFDATRINGNVNLNQNAALVLGKAALWGKIQGQGNSRVSLNQHSKWHLTGDSQVHNLSLADSHIHLNNASDAQSANKYHTIKINHLSGNGHFHYLTDLAKNLGDKVLVKESASGHYQLHVQNKTGEPNQEGLDLFDASSVQDRSRLFVSLANHYVDLGALRYTIKTENGITRLYNPYAGNGRPVKPAPSPAANTASQAQKATQTDGAQIAKPQNIVVAPPSPQANQAEEALRQQAKAEQVKRQQAAEAEKVARQKDEEAKRKAAEIARQQEEARKAAELAAKQKAEAERKARELARQKAEEASHQANAKPKRRRRRAILPRPPAPVFSLDDYDAKDNSESSIGNLARVIPRMGRELINDYEEIPLEELEDEAEEERRQATQFHSKSRNRRAISSEPSSDEDASESVSTSDKHPQDNTELHEKVETAGLQPRAAQPRTQAAAQADAVSTNTNSALSDAMASTQSILLDTGAYLTRHIAQKSRADAEKNSVWMSNTGYGRDYASAQYRRFSSKRTQTQIGIDRSLSENMQIGGVLTYSDSQHTFDQAGGKNTFVQANLYGKYYLNDAWYVAGDIGAGSLRSRLQTQQKANFNRTSIQTGLTLGNTLKINQFEIVPSAGIRYSRLSSADYKLGDDSVKVSSMAVKTLTAGLDFAYRFKVGNLTVKPLLSAAYFANYGKGGVNVGGKSFAYKADNQQQYSAGVALLYRNVTLNVNGSITKGKQLEKQKSGQIKIQIRF.

The N-terminal stretch at 1 to 27 (MKAKRFKINAISLSIFLAYALTPYSEA) is a signal peptide. Residues 28-322 (ALVRDDVDYQ…NIYKKEFADK (295 aa)) form the Peptidase S6 domain. Residue serine 278 is part of the active site. Disordered stretches follow at residues 979-1136 (GRPV…KDNS) and 1166-1217 (LEDE…NTEL). Over residues 989-1004 (AANTASQAQKATQTDG) the composition is skewed to polar residues. Basic and acidic residues predominate over residues 1045 to 1101 (EAEKVARQKDEEAKRKAAEIARQQEEARKAAELAAKQKAEAERKARELARQKAEEAS). The span at 1107-1116 (KPKRRRRRAI) shows a compositional bias: basic residues. Basic and acidic residues predominate over residues 1207–1217 (SDKHPQDNTEL). Residues 1280–1532 (ADAEKNSVWM…SGQIKIQIRF (253 aa)) form the Autotransporter domain.

Its subcellular location is the periplasm. The protein resides in the secreted. It localises to the cell surface. The protein localises to the cell outer membrane. It carries out the reaction Cleavage of immunoglobulin A molecules at certain Pro-|-Xaa bonds in the hinge region. No small molecule substrates are known.. Its function is as follows. This protease is specific for immunoglobulin A. The sequence is that of IgA-specific serine endopeptidase autotransporter (iga) from Neisseria gonorrhoeae.